A 117-amino-acid chain; its full sequence is Fluoride-specific ion channel FluC 2 (117 aa).

Transmembrane regions (helical) follow at residues 1–21 (MISI…RSAI), 33–53 (LPIA…LTIG), 60–80 (WFPA…STLA), and 95–115 (LFLN…YIGY). Residues Gly-71 and Thr-74 each contribute to the Na(+) site.

It belongs to the fluoride channel Fluc/FEX (TC 1.A.43) family.

It is found in the cell membrane. The catalysed reaction is fluoride(in) = fluoride(out). Na(+) is not transported, but it plays an essential structural role and its presence is essential for fluoride channel function. In terms of biological role, fluoride-specific ion channel. Important for reducing fluoride concentration in the cell, thus reducing its toxicity. The polypeptide is Fluoride-specific ion channel FluC 2 (Staphylococcus aureus (strain COL)).